A 170-amino-acid polypeptide reads, in one-letter code: Adenine phosphoribosyltransferase (170 aa).

This sequence belongs to the purine/pyrimidine phosphoribosyltransferase family. Homodimer.

It is found in the cytoplasm. It catalyses the reaction AMP + diphosphate = 5-phospho-alpha-D-ribose 1-diphosphate + adenine. It participates in purine metabolism; AMP biosynthesis via salvage pathway; AMP from adenine: step 1/1. Its function is as follows. Catalyzes a salvage reaction resulting in the formation of AMP, that is energically less costly than de novo synthesis. The protein is Adenine phosphoribosyltransferase of Mycoplasmopsis pulmonis (strain UAB CTIP) (Mycoplasma pulmonis).